Reading from the N-terminus, the 329-residue chain is Cathepsin K (329 aa).

A signal peptide spans 1-15 (MWGLKVLLLPVVSFA). Residues 16–114 (LHPEEILDTQ…TLYIPDWEGR (99 aa)) constitute a propeptide, activation peptide. N-linked (GlcNAc...) asparagine glycosylation occurs at asparagine 103. Cystine bridges form between cysteine 136/cysteine 177 and cysteine 170/cysteine 210. The active site involves cysteine 139. Asparagine 268 carries an N-linked (GlcNAc...) asparagine glycan. An intrachain disulfide couples cysteine 269 to cysteine 318. Active-site residues include histidine 276 and asparagine 296.

Belongs to the peptidase C1 family. In terms of tissue distribution, predominantly expressed in osteclasts (bones).

The protein localises to the lysosome. It localises to the secreted. It is found in the apical cell membrane. It catalyses the reaction Broad proteolytic activity. With small-molecule substrates and inhibitors, the major determinant of specificity is P2, which is preferably Leu, Met &gt; Phe, and not Arg.. Thiol protease involved in osteoclastic bone resorption and may participate partially in the disorder of bone remodeling. Displays potent endoprotease activity against fibrinogen at acid pH. May play an important role in extracellular matrix degradation. Involved in the release of thyroid hormone thyroxine (T4) by limited proteolysis of TG/thyroglobulin in the thyroid follicle lumen. This chain is Cathepsin K (CTSK), found in Oryctolagus cuniculus (Rabbit).